Consider the following 400-residue polypeptide: Delta(12) fatty acid desaturase (400 aa).

A helical transmembrane segment spans residues 91-111 (LAWPAYWIMQGIVCTGIWVLA). Residues 112–116 (HECGH) carry the Histidine box-1 motif. The Histidine box-2 motif lies at 148–152 (HSKHH). 3 helical membrane passes run 199-219 (IVTL…YLIM), 245-265 (FFDI…LIYA), and 277-297 (YYII…FLQH). Positions 339–343 (HVAHH) match the Histidine box-3 motif.

Belongs to the fatty acid desaturase type 1 family.

It is found in the membrane. It carries out the reaction (9Z)-octadecenoyl-CoA + 2 Fe(II)-[cytochrome b5] + O2 + 2 H(+) = (9Z,12Z)-octadecadienoyl-CoA + 2 Fe(III)-[cytochrome b5] + 2 H2O. It catalyses the reaction (9Z)-hexadecenoyl-CoA + 2 Fe(II)-[cytochrome b5] + O2 + 2 H(+) = (9Z,12Z)-hexadecadienoyl-CoA + 2 Fe(III)-[cytochrome b5] + 2 H2O. Its pathway is lipid metabolism; polyunsaturated fatty acid biosynthesis. Functionally, catalyzes the desaturation of oleic acid (Delta(9)-18:1) to linoleic acid (Delta(9), Delta(12)-18:2). The polypeptide is Delta(12) fatty acid desaturase (Mortierella isabellina (Filamentous fungus)).